Reading from the N-terminus, the 311-residue chain is tRNA dimethylallyltransferase 2 (311 aa).

15 to 22 (GPTAVGKT) lines the ATP pocket. A substrate-binding site is contributed by 17-22 (TAVGKT). Positions 40-43 (DSMQ) are interaction with substrate tRNA.

This sequence belongs to the IPP transferase family. As to quaternary structure, monomer. It depends on Mg(2+) as a cofactor.

The enzyme catalyses adenosine(37) in tRNA + dimethylallyl diphosphate = N(6)-dimethylallyladenosine(37) in tRNA + diphosphate. Functionally, catalyzes the transfer of a dimethylallyl group onto the adenine at position 37 in tRNAs that read codons beginning with uridine, leading to the formation of N6-(dimethylallyl)adenosine (i(6)A). The sequence is that of tRNA dimethylallyltransferase 2 from Syntrophus aciditrophicus (strain SB).